Reading from the N-terminus, the 910-residue chain is Valine--tRNA ligase (910 aa).

The 'HIGH' region motif lies at 45 to 55 (PNVTGSLHMGH). The 'KMSKS' region motif lies at 554-558 (KMSKS). Lys557 lines the ATP pocket. Residues 842–910 (DLQAEAARLA…TAESRIRDAS (69 aa)) are a coiled coil.

It belongs to the class-I aminoacyl-tRNA synthetase family. ValS type 1 subfamily. Monomer.

The protein localises to the cytoplasm. The enzyme catalyses tRNA(Val) + L-valine + ATP = L-valyl-tRNA(Val) + AMP + diphosphate. Catalyzes the attachment of valine to tRNA(Val). As ValRS can inadvertently accommodate and process structurally similar amino acids such as threonine, to avoid such errors, it has a 'posttransfer' editing activity that hydrolyzes mischarged Thr-tRNA(Val) in a tRNA-dependent manner. The protein is Valine--tRNA ligase of Brucella suis biovar 1 (strain 1330).